The sequence spans 926 residues: MLRAQRLRLARLRACVSRGLHHKPVMALRREDVNAWERRAPLAPKHIKGITKLGYKVLIQPSNRRAIHDKEYVRAGGILQEDITEACLILGVKRPPEEKLMSKKTYAFFSHTIKAQEANMSLLDEVLKQEIRLIDYEKMVDHRGSRIVAFGHWAGVAGMINILHGMGLRLLALGHHTPFMHLGMAHNYRNSSQAVQAVRDAGYEISLGLMPKSIGPLTFVFTGTGNVSKGAQEVFNELPCEYVEPHELKEVSKTGDLRKVYGTVLSRHHHLVRKTDGVYDPVEYEKYPERYISRFNADIAPYTTCLINGIYWEQNTPRLLTRQDAQSLLVPVKSSVVPVEGCPELPHKLVAICDISADTGGSIDFMTECTTIERPFCMYDADQHIIHDSVEGSGILMCSIDNLPAQLPIEATEYFGDMLYPYVEEMLLSDASQPLESQNFSPVVRDAVITSNGLLTDKYKYIQKLRESRERIQFLSMSTKKKVLVLGSGYVSGPVLEYLSRGNNIEITLGSDMTNQMQQLSKKYDINTVNVTVGKQEDKLQSLVESQDLVISLLPYVLHPVVAKACIDSKVNMVTASYITPAMKELEKSVDDAGITVIGELGLDPGLDHMLAMETIDKAKDLGATIESYVSYCGGLPAPEHSDNPLRYKFSWSPVGVLMNIMQPASYLLNGKVVNVTGGVSFLNSVTPMDYFPGLNLEGYPNRDSTKYAEIYGISSAHTLLRGTLRYKGYSKALNGFVKLGLINRETYPALRPEANPLTWKQLLCDLVGISRSSSCEKLKEVVFTKLGGDSTQLEAAEWLGLLGDEQVPQAESIVDAFSKHLVSKLSYGPEEKDMIVMRDSFGIRHPSGHLENKTIDLVVYGDFNGFSAMAKTVGLPTAMAAKMLLDGEIETKGLMGPFSKEIYGPILERIKAEGIVFNTQSTIKL.

A mitochondrion-targeting transit peptide spans 1 to 27 (MLRAQRLRLARLRACVSRGLHHKPVMA). The lysine-ketoglutarate reductase stretch occupies residues 28 to 455 (LRREDVNAWE…DAVITSNGLL (428 aa)). 3 positions are modified to N6-acetyllysine: lysine 48, lysine 52, and lysine 56. Lysine 93 carries the post-translational modification N6-acetyllysine; alternate. The residue at position 93 (lysine 93) is an N6-succinyllysine; alternate. Residue lysine 128 is modified to N6-acetyllysine. Lysine 138 carries the N6-acetyllysine; alternate modification. Lysine 138 carries the post-translational modification N6-succinyllysine; alternate. Lysine 274 carries the post-translational modification N6-succinyllysine. The residue at position 286 (lysine 286) is an N6-acetyllysine; alternate. Lysine 286 is modified (N6-succinyllysine; alternate). At lysine 333 the chain carries N6-succinyllysine. Residue lysine 458 is modified to N6-acetyllysine; alternate. Lysine 458 carries the post-translational modification N6-succinyllysine; alternate. Positions 477–926 (MSTKKKVLVL…VFNTQSTIKL (450 aa)) are saccharopine dehydrogenase. NAD(+)-binding residues include serine 488, aspartate 512, and glutamine 516. Residues lysine 523 and lysine 535 each carry the N6-acetyllysine; alternate modification. An N6-succinyllysine; alternate mark is found at lysine 523 and lysine 535. NAD(+) contacts are provided by leucine 554, alanine 576, and serine 577. L-saccharopine is bound at residue 577 to 578 (SY). The residue at position 584 (lysine 584) is an N6-acetyllysine; alternate. N6-succinyllysine; alternate is present on lysine 584. The NAD(+) site is built by leucine 603, aspartate 604, and proline 605. Aspartate 604 contributes to the L-saccharopine binding site. Arginine 703 lines the L-saccharopine pocket. Position 707 is an N6-acetyllysine (lysine 707). 724–726 (TLR) contacts L-saccharopine. N6-succinyllysine is present on lysine 732. The residue at position 739 (lysine 739) is an N6-acetyllysine. Lysine 761 is modified (N6-acetyllysine; alternate). Position 761 is an N6-succinyllysine; alternate (lysine 761). 2 positions are modified to N6-acetyllysine: lysine 778 and lysine 780.

It in the N-terminal section; belongs to the AlaDH/PNT family. This sequence in the C-terminal section; belongs to the saccharopine dehydrogenase family. As to quaternary structure, homotetramer.

It localises to the mitochondrion. It carries out the reaction L-saccharopine + NADP(+) + H2O = L-lysine + 2-oxoglutarate + NADPH + H(+). The catalysed reaction is L-saccharopine + NAD(+) + H2O = (S)-2-amino-6-oxohexanoate + L-glutamate + NADH + H(+). Its pathway is amino-acid degradation; L-lysine degradation via saccharopine pathway; glutaryl-CoA from L-lysine: step 1/6. It functions in the pathway amino-acid degradation; L-lysine degradation via saccharopine pathway; glutaryl-CoA from L-lysine: step 2/6. Functionally, bifunctional enzyme that catalyzes the first two steps in lysine degradation. In Rattus norvegicus (Rat), this protein is Alpha-aminoadipic semialdehyde synthase, mitochondrial.